We begin with the raw amino-acid sequence, 225 residues long: Heptaprenylglyceryl phosphate synthase (225 aa).

K6 is a sn-glycerol 1-phosphate binding site. Mg(2+) contacts are provided by D8 and T34. Sn-glycerol 1-phosphate contacts are provided by residues 153 to 158, G183, and 203 to 204; these read YVEYSG and GN.

This sequence belongs to the GGGP/HepGP synthase family. Group I subfamily. In terms of assembly, homodimer. Mg(2+) is required as a cofactor.

It catalyses the reaction sn-glycerol 1-phosphate + all-trans-heptaprenyl diphosphate = 3-heptaprenyl-sn-glycero-1-phosphate + diphosphate. It functions in the pathway membrane lipid metabolism; glycerophospholipid metabolism. Functionally, prenyltransferase that catalyzes in vivo the transfer of the heptaprenyl moiety of heptaprenyl pyrophosphate (HepPP; 35 carbon atoms) to the C3 hydroxyl of sn-glycerol-1-phosphate (G1P), producing heptaprenylglyceryl phosphate (HepGP). This reaction is an ether-bond-formation step in the biosynthesis of archaea-type G1P-based membrane lipids found in Bacillales. This chain is Heptaprenylglyceryl phosphate synthase, found in Listeria monocytogenes serotype 4b (strain CLIP80459).